The following is a 172-amino-acid chain: Adenine phosphoribosyltransferase (172 aa).

It belongs to the purine/pyrimidine phosphoribosyltransferase family. Homodimer.

The protein localises to the cytoplasm. The enzyme catalyses AMP + diphosphate = 5-phospho-alpha-D-ribose 1-diphosphate + adenine. It participates in purine metabolism; AMP biosynthesis via salvage pathway; AMP from adenine: step 1/1. Its function is as follows. Catalyzes a salvage reaction resulting in the formation of AMP, that is energically less costly than de novo synthesis. This Crocosphaera subtropica (strain ATCC 51142 / BH68) (Cyanothece sp. (strain ATCC 51142)) protein is Adenine phosphoribosyltransferase.